The following is a 250-amino-acid chain: Ino eighty subunit 3 (250 aa).

Residues P29–H70 are disordered. A compositionally biased stretch (low complexity) spans S52–H70. Phosphoserine is present on residues S157 and S211.

In terms of assembly, component of the chromatin-remodeling INO80 complex, at least composed of ARP4, ARP5, ARP8, RVB1, RVB2, TAF14, NHP10, IES1, IES3, IES4, IES6, ACT1, IES2, IES5 and INO80.

The protein resides in the nucleus. Probably involved in transcription regulation via its interaction with the INO80 complex, a chromatin-remodeling complex. This is Ino eighty subunit 3 (IES3) from Saccharomyces cerevisiae (strain ATCC 204508 / S288c) (Baker's yeast).